The chain runs to 152 residues: 6,7-dimethyl-8-ribityllumazine synthase (152 aa).

5-amino-6-(D-ribitylamino)uracil contacts are provided by residues Phe-21, 55 to 57, and 79 to 81; these read AFE and CVI. (2S)-2-hydroxy-3-oxobutyl phosphate is bound at residue 84-85; the sequence is AT. His-87 (proton donor) is an active-site residue. Phe-112 contacts 5-amino-6-(D-ribitylamino)uracil. Arg-126 contacts (2S)-2-hydroxy-3-oxobutyl phosphate.

Belongs to the DMRL synthase family. In terms of assembly, forms an icosahedral capsid composed of 60 subunits, arranged as a dodecamer of pentamers.

The enzyme catalyses (2S)-2-hydroxy-3-oxobutyl phosphate + 5-amino-6-(D-ribitylamino)uracil = 6,7-dimethyl-8-(1-D-ribityl)lumazine + phosphate + 2 H2O + H(+). It functions in the pathway cofactor biosynthesis; riboflavin biosynthesis; riboflavin from 2-hydroxy-3-oxobutyl phosphate and 5-amino-6-(D-ribitylamino)uracil: step 1/2. In terms of biological role, catalyzes the formation of 6,7-dimethyl-8-ribityllumazine by condensation of 5-amino-6-(D-ribitylamino)uracil with 3,4-dihydroxy-2-butanone 4-phosphate. This is the penultimate step in the biosynthesis of riboflavin. This is 6,7-dimethyl-8-ribityllumazine synthase from Staphylococcus haemolyticus (strain JCSC1435).